The primary structure comprises 537 residues: 5,6-dihydroxyindole-2-carboxylic acid oxidase (537 aa).

Positions 1–24 are cleaved as a signal peptide; it reads MSAPKLLSLGCIFFPLLLFQQARA. Residues 25–477 are Lumenal, melanosome-facing; that stretch reads QFPRQCATVE…WPSREFSVPE (453 aa). 5 disulfide bridges follow: cysteine 30–cysteine 41, cysteine 42–cysteine 65, cysteine 56–cysteine 99, cysteine 101–cysteine 110, and cysteine 113–cysteine 122. 2 N-linked (GlcNAc...) asparagine glycosylation sites follow: asparagine 96 and asparagine 104. N-linked (GlcNAc...) asparagine glycosylation is present at asparagine 181. Zn(2+) is bound by residues histidine 192, histidine 215, and histidine 224. Disulfide bonds link cysteine 258–cysteine 261 and cysteine 290–cysteine 303. Asparagine 304 and asparagine 350 each carry an N-linked (GlcNAc...) asparagine glycan. Zn(2+)-binding residues include histidine 377 and histidine 381. N-linked (GlcNAc...) asparagine glycosylation occurs at asparagine 385. Histidine 404 provides a ligand contact to Zn(2+). Residues 478 to 501 traverse the membrane as a helical segment; the sequence is IIAIAVVGALLLVALIFGTASYLI. Topologically, residues 502–537 are cytoplasmic; the sequence is RARRSMDEANQPLLTDQYQCYAEEYEKLQNPNQSVV.

Belongs to the tyrosinase family. In terms of assembly, monomer. Interacts with ATP7A. Interacts with SLC45A2. Requires Cu(2+) as cofactor. The cofactor is Zn(2+). In terms of processing, glycosylated. As to expression, pigment cells.

The protein localises to the melanosome membrane. The enzyme catalyses 2 5,6-dihydroxyindole-2-carboxylate + O2 = 2 indole-5,6-quinone-2-carboxylate + 2 H2O. It functions in the pathway pigment biosynthesis; melanin biosynthesis. With respect to regulation, the activity depends critically on the nature of the bound metal ion. Catalyzes the oxidation of 5,6-dihydroxyindole-2-carboxylic acid (DHICA) in the presence of bound Cu(2+) ions, but lacks activity in the presence of bound Zn(2+) ions. Functionally, plays a role in melanin biosynthesis. Catalyzes the oxidation of 5,6-dihydroxyindole-2-carboxylic acid (DHICA) into indole-5,6-quinone-2-carboxylic acid in the presence of bound Cu(2+) ions, but not in the presence of Zn(2+). May regulate or influence the type of melanin synthesized. Also to a lower extent, capable of hydroxylating tyrosine and producing melanin. In Homo sapiens (Human), this protein is 5,6-dihydroxyindole-2-carboxylic acid oxidase.